We begin with the raw amino-acid sequence, 69 residues long: Cytochrome c oxidase subunit 8A, mitochondrial (69 aa).

A mitochondrion-targeting transit peptide spans 1–25 (MSVLTSLLLRGLTGSARRLPVPRAK). An SIFI-degron motif is present at residues 2 to 19 (SVLTSLLLRGLTGSARRL). Residues 26–36 (VHSMPPEEELG) lie on the Mitochondrial matrix side of the membrane. The chain crosses the membrane as a helical span at residues 37-60 (TLEKAIALTSCFVSLFLPAGWILS). At 61 to 69 (HLEDYKRPE) the chain is on the mitochondrial intermembrane side.

This sequence belongs to the cytochrome c oxidase VIII family. As to quaternary structure, component of the cytochrome c oxidase (complex IV, CIV), a multisubunit enzyme composed of 14 subunits. The complex is composed of a catalytic core of 3 subunits MT-CO1, MT-CO2 and MT-CO3, encoded in the mitochondrial DNA, and 11 supernumerary subunits COX4I, COX5A, COX5B, COX6A, COX6B, COX6C, COX7A, COX7B, COX7C, COX8 and NDUFA4, which are encoded in the nuclear genome. The complex exists as a monomer or a dimer and forms supercomplexes (SCs) in the inner mitochondrial membrane with NADH-ubiquinone oxidoreductase (complex I, CI) and ubiquinol-cytochrome c oxidoreductase (cytochrome b-c1 complex, complex III, CIII), resulting in different assemblies (supercomplex SCI(1)III(2)IV(1) and megacomplex MCI(2)III(2)IV(2)). Post-translationally, in response to mitochondrial stress, the precursor protein is ubiquitinated by the SIFI complex in the cytoplasm before mitochondrial import, leading to its degradation. Within the SIFI complex, UBR4 initiates ubiquitin chain that are further elongated or branched by KCMF1.

It is found in the mitochondrion inner membrane. It participates in energy metabolism; oxidative phosphorylation. Component of the cytochrome c oxidase, the last enzyme in the mitochondrial electron transport chain which drives oxidative phosphorylation. The respiratory chain contains 3 multisubunit complexes succinate dehydrogenase (complex II, CII), ubiquinol-cytochrome c oxidoreductase (cytochrome b-c1 complex, complex III, CIII) and cytochrome c oxidase (complex IV, CIV), that cooperate to transfer electrons derived from NADH and succinate to molecular oxygen, creating an electrochemical gradient over the inner membrane that drives transmembrane transport and the ATP synthase. Cytochrome c oxidase is the component of the respiratory chain that catalyzes the reduction of oxygen to water. Electrons originating from reduced cytochrome c in the intermembrane space (IMS) are transferred via the dinuclear copper A center (CU(A)) of subunit 2 and heme A of subunit 1 to the active site in subunit 1, a binuclear center (BNC) formed by heme A3 and copper B (CU(B)). The BNC reduces molecular oxygen to 2 water molecules using 4 electrons from cytochrome c in the IMS and 4 protons from the mitochondrial matrix. In Papio anubis (Olive baboon), this protein is Cytochrome c oxidase subunit 8A, mitochondrial (COX8A).